A 421-amino-acid chain; its full sequence is 3-phosphoshikimate 1-carboxyvinyltransferase (421 aa).

The 3-phosphoshikimate site is built by lysine 19, serine 20, and arginine 24. Lysine 19 is a binding site for phosphoenolpyruvate. 2 residues coordinate phosphoenolpyruvate: glycine 88 and arginine 116. 4 residues coordinate 3-phosphoshikimate: serine 160, glutamine 162, aspartate 307, and lysine 334. Glutamine 162 contributes to the phosphoenolpyruvate binding site. Aspartate 307 functions as the Proton acceptor in the catalytic mechanism. Residues arginine 338 and arginine 380 each contribute to the phosphoenolpyruvate site.

Belongs to the EPSP synthase family. As to quaternary structure, monomer.

It localises to the cytoplasm. It catalyses the reaction 3-phosphoshikimate + phosphoenolpyruvate = 5-O-(1-carboxyvinyl)-3-phosphoshikimate + phosphate. Its pathway is metabolic intermediate biosynthesis; chorismate biosynthesis; chorismate from D-erythrose 4-phosphate and phosphoenolpyruvate: step 6/7. Functionally, catalyzes the transfer of the enolpyruvyl moiety of phosphoenolpyruvate (PEP) to the 5-hydroxyl of shikimate-3-phosphate (S3P) to produce enolpyruvyl shikimate-3-phosphate and inorganic phosphate. This Thermotoga sp. (strain RQ2) protein is 3-phosphoshikimate 1-carboxyvinyltransferase.